A 314-amino-acid chain; its full sequence is 1-aminocyclopropane-1-carboxylate oxidase 1 (314 aa).

One can recognise a Fe2OG dioxygenase domain in the interval 153 to 253 (PNFGTKVSNY…RMSIASFYNP (101 aa)). Fe cation is bound by residues His-177, Asp-179, and His-234.

Belongs to the iron/ascorbate-dependent oxidoreductase family. In terms of assembly, monomer. The cofactor is Fe cation.

The catalysed reaction is 1-aminocyclopropane-1-carboxylate + L-ascorbate + O2 = ethene + L-dehydroascorbate + hydrogen cyanide + CO2 + 2 H2O. Its pathway is alkene biosynthesis; ethylene biosynthesis via S-adenosyl-L-methionine; ethylene from S-adenosyl-L-methionine: step 2/2. The sequence is that of 1-aminocyclopropane-1-carboxylate oxidase 1 from Malus domestica (Apple).